A 290-amino-acid polypeptide reads, in one-letter code: uncharacterized protein (290 aa).

Positions 1 to 61 constitute an HTH lysR-type domain; it reads MVMNMNHLHI…RDKHHGLMLT (61 aa). The segment at residues 20–39 is a DNA-binding region (H-T-H motif); sequence ITEAAKELFISQPAVSKAIK.

This sequence belongs to the LysR transcriptional regulatory family.

This is an uncharacterized protein from Bacillus subtilis (strain 168).